We begin with the raw amino-acid sequence, 1053 residues long: Serine/threonine-protein phosphatase 6 regulatory ankyrin repeat subunit A (1053 aa).

ANK repeat units follow at residues 40 to 69 (EKRT…RVNA), 73 to 102 (KWLT…DVNA), 106 to 135 (NWQT…NVNV), 139 to 168 (AGRT…NINA), 172 to 201 (KDRR…EVTC), 205 to 234 (KSYT…DMNE), 238 to 267 (YGNT…NVNQ), 271 to 301 (KGFT…DVNM), 305 to 334 (DGKT…VIDC), 338 to 367 (NGNT…DTAK), 371 to 400 (HGMF…DIDT), 404 to 433 (FGRT…DFNK), 437 to 466 (FGRS…SVND), 470 to 500 (RGCT…NPGI), 504 to 534 (QGYN…DVLM), 549 to 578 (ATIS…DLDV), 582 to 611 (SGRT…SILV), 616 to 645 (LKRT…PQNA), 652 to 681 (NGQT…NVDA), 685 to 714 (WGRT…KCLL), 718 to 747 (RGRT…SVDA), 755 to 786 (HGYT…KIDG), 788 to 817 (AFSP…SIVN), 822 to 851 (KGRT…QVNS), 855 to 885 (TGKT…DLTL), 889 to 918 (SKNT…DRNL), and 925 to 954 (ALQT…SVLA). Phosphoserine is present on residues serine 1007 and serine 1011.

Protein phosphatase 6 (PP6) holoenzyme is proposed to be a heterotrimeric complex formed by the catalytic subunit, a SAPS domain-containing subunit (PP6R) and an ankyrin repeat-domain containing regulatory subunit (ARS). Interacts with PPP1C and HNRPK. Interacts with PPP6C, PPP6R1 and PPP6R3. In terms of processing, ubiquitinated by the ECS(RAB40C) complex leading to its degradation and decreased PP6 activity. In terms of tissue distribution, widely expressed (at protein level).

It is found in the nucleus. Its subcellular location is the nucleoplasm. The protein resides in the cytoplasm. It localises to the cytosol. The protein localises to the cell projection. It is found in the lamellipodium. Its function is as follows. Putative regulatory subunit of protein phosphatase 6 (PP6) that may be involved in the recognition of phosphoprotein substrates. Involved in the PP6-mediated dephosphorylation of NFKBIE opposing its degradation in response to TNF-alpha. Selectively inhibits the phosphatase activity of PPP1C. Targets PPP1C to modulate HNRPK phosphorylation. Involved in the PP6-mediated dephosphorylation of MOB1 and induced focal adhesion assembly during cell migration. The polypeptide is Serine/threonine-protein phosphatase 6 regulatory ankyrin repeat subunit A (Ankrd28) (Mus musculus (Mouse)).